We begin with the raw amino-acid sequence, 491 residues long: Argininosuccinate lyase (491 aa).

Belongs to the lyase 1 family. Argininosuccinate lyase subfamily.

It is found in the cytoplasm. It catalyses the reaction 2-(N(omega)-L-arginino)succinate = fumarate + L-arginine. It functions in the pathway amino-acid biosynthesis; L-arginine biosynthesis; L-arginine from L-ornithine and carbamoyl phosphate: step 3/3. In Methanosarcina barkeri (strain Fusaro / DSM 804), this protein is Argininosuccinate lyase.